A 346-amino-acid polypeptide reads, in one-letter code: N-acetyl-gamma-glutamyl-phosphate reductase (346 aa).

Cys-150 is an active-site residue.

It belongs to the NAGSA dehydrogenase family. Type 1 subfamily.

Its subcellular location is the cytoplasm. The enzyme catalyses N-acetyl-L-glutamate 5-semialdehyde + phosphate + NADP(+) = N-acetyl-L-glutamyl 5-phosphate + NADPH + H(+). Its pathway is amino-acid biosynthesis; L-arginine biosynthesis; N(2)-acetyl-L-ornithine from L-glutamate: step 3/4. Catalyzes the NADPH-dependent reduction of N-acetyl-5-glutamyl phosphate to yield N-acetyl-L-glutamate 5-semialdehyde. This chain is N-acetyl-gamma-glutamyl-phosphate reductase, found in Acetivibrio thermocellus (strain ATCC 27405 / DSM 1237 / JCM 9322 / NBRC 103400 / NCIMB 10682 / NRRL B-4536 / VPI 7372) (Clostridium thermocellum).